The primary structure comprises 305 residues: Endonuclease III-like protein 1 (305 aa).

Residues 1 to 28 constitute a mitochondrion transit peptide; that stretch reads MNAAGVRMVVTRARSRGTGASLRRRGEK. Positions 1–83 are disordered; it reads MNAAGVRMVV…HLQAPSWQPQ (83 aa). S64 carries the post-translational modification Phosphoserine. A HhH domain is found at 192 to 216; sequence RYDGDIPASVAELVALPGVGPKMAH. The active-site Nucleophile; for N-glycosylase activity is K213. [4Fe-4S] cluster-binding residues include C283, C290, C293, and C299.

Belongs to the Nth/MutY family. In terms of assembly, interacts with YBX1. Interacts with ERCC5/XPG; the interaction stimulates NTHL1 activity and NTHL1 binding to its DNA substrate. [4Fe-4S] cluster is required as a cofactor.

The protein localises to the nucleus. It localises to the mitochondrion. It catalyses the reaction 2'-deoxyribonucleotide-(2'-deoxyribose 5'-phosphate)-2'-deoxyribonucleotide-DNA = a 3'-end 2'-deoxyribonucleotide-(2,3-dehydro-2,3-deoxyribose 5'-phosphate)-DNA + a 5'-end 5'-phospho-2'-deoxyribonucleoside-DNA + H(+). Bifunctional DNA N-glycosylase with associated apurinic/apyrimidinic (AP) lyase function that catalyzes the first step in base excision repair (BER), the primary repair pathway for the repair of oxidative DNA damage. The DNA N-glycosylase activity releases the damaged DNA base from DNA by cleaving the N-glycosidic bond, leaving an AP site. The AP lyase activity cleaves the phosphodiester bond 3' to the AP site by a beta-elimination. Primarily recognizes and repairs oxidative base damage of pyrimidines. The polypeptide is Endonuclease III-like protein 1 (Bos taurus (Bovine)).